Here is a 74-residue protein sequence, read N- to C-terminus: MTESIMEGFLNLAQRLGIGKEALQALELNGNQNDRHHHFAPFLQSGGVMAVKPACKIVVRNHGLAILGVLFGLI.

This is an uncharacterized protein from Homo sapiens (Human).